The primary structure comprises 161 residues: Aklanonic acid methyl ester cyclase DauD (161 aa).

Q106 is a binding site for substrate. Residues 137–161 are disordered; it reads WPTPEGWRPCPPPPRRRHDRSTDTP.

This sequence belongs to the polyketide cyclase DnrD family. As to quaternary structure, homotetramer.

The enzyme catalyses methyl aklanonate = aklaviketone. It participates in antibiotic biosynthesis; daunorubicin biosynthesis. The protein operates within antibiotic biosynthesis; carminomycin biosynthesis. It functions in the pathway antibiotic biosynthesis; rhodomycin biosynthesis. Its pathway is antibiotic biosynthesis; aclacinomycin biosynthesis. In terms of biological role, involved in the biosynthesis of aklavinone which is an important precursor common to the formation of the clinically significant anthracyclines such as carminomycin, daunorubicin (daunomycin), rhodomycin, aclacinomycin T (aklavin) and aclacinomycin A (aclarubicin). These compounds are aromatic polyketide antibiotics that exhibit high cytotoxicity and are widely applied in the chemotherapy of a variety of cancers. Catalyzes the cyclization of aklanonic acid methyl ester to yield aklaviketone. This chain is Aklanonic acid methyl ester cyclase DauD (dauD), found in Streptomyces sp. (strain C5).